Reading from the N-terminus, the 542-residue chain is CTP synthase (542 aa).

Residues 1–265 (MARYVFITGG…DSEILSAFGI (265 aa)) are amidoligase domain. Serine 13 lines the CTP pocket. A UTP-binding site is contributed by serine 13. Residue 14–19 (SLGKGI) coordinates ATP. Tyrosine 54 contributes to the L-glutamine binding site. Aspartate 71 contributes to the ATP binding site. Mg(2+) contacts are provided by aspartate 71 and glutamate 139. Residues 146–148 (DIE), 186–191 (KTKPTQ), and lysine 222 contribute to the CTP site. UTP contacts are provided by residues 186 to 191 (KTKPTQ) and lysine 222. Residues 291–541 (TIAIVGKYTG…IAATVEQSRL (251 aa)) form the Glutamine amidotransferase type-1 domain. Residue alanine 353 participates in L-glutamine binding. The active-site Nucleophile; for glutamine hydrolysis is cysteine 380. L-glutamine contacts are provided by residues 381–384 (FGMQ), glutamate 404, and arginine 469. Residues histidine 514 and glutamate 516 contribute to the active site.

Belongs to the CTP synthase family. Homotetramer.

It catalyses the reaction UTP + L-glutamine + ATP + H2O = CTP + L-glutamate + ADP + phosphate + 2 H(+). The catalysed reaction is L-glutamine + H2O = L-glutamate + NH4(+). It carries out the reaction UTP + NH4(+) + ATP = CTP + ADP + phosphate + 2 H(+). The protein operates within pyrimidine metabolism; CTP biosynthesis via de novo pathway; CTP from UDP: step 2/2. Allosterically activated by GTP, when glutamine is the substrate; GTP has no effect on the reaction when ammonia is the substrate. The allosteric effector GTP functions by stabilizing the protein conformation that binds the tetrahedral intermediate(s) formed during glutamine hydrolysis. Inhibited by the product CTP, via allosteric rather than competitive inhibition. Catalyzes the ATP-dependent amination of UTP to CTP with either L-glutamine or ammonia as the source of nitrogen. Regulates intracellular CTP levels through interactions with the four ribonucleotide triphosphates. This is CTP synthase from Bartonella bacilliformis (strain ATCC 35685 / KC583 / Herrer 020/F12,63).